The chain runs to 393 residues: Zinc finger CCHC domain-containing protein 18 (393 aa).

Disordered regions lie at residues 281–300 (VEPEDPPLSSPGASSLRGTA) and 313–341 (DDFDEESPSTSSGSGQRNNGPGDLGRTRK). Composition is skewed to polar residues over residues 291–300 (PGASSLRGTA) and 320–331 (PSTSSGSGQRNN). The CCHC-type zinc finger occupies 346–363 (IRCPHCGEEGHAKETCDN).

It belongs to the ZCCHC12 family.

This chain is Zinc finger CCHC domain-containing protein 18, found in Mus musculus (Mouse).